Reading from the N-terminus, the 101-residue chain is MTSKLAVALLAAFLLSAALCEAAVLSRMSTELRCQCIKTHSTPFHPKFIKELRVIESGPHCENSEIIVKLTNGNEVCLNPKEKWVQKVVQVFVKRAEKQDP.

The first 22 residues, 1–22 (MTSKLAVALLAAFLLSAALCEA), serve as a signal peptide directing secretion. 2 cysteine pairs are disulfide-bonded: cysteine 34–cysteine 61 and cysteine 36–cysteine 77.

Belongs to the intercrine alpha (chemokine CxC) family. In terms of assembly, homodimer. Interacts with TNFAIP6 (via Link domain); this interaction interferes with chemokine binding to glycosaminoglycans.

The protein localises to the secreted. Functionally, chemotactic factor that mediates inflammatory response by attracting neutrophils, basophils, and T-cells to clear pathogens and protect the host from infection. Also plays an important role in neutrophil activation. Released in response to an inflammatory stimulus, exerts its effect by binding to the G-protein-coupled receptors CXCR1 and CXCR2, primarily found in neutrophils, monocytes and endothelial cells. G-protein heterotrimer (alpha, beta, gamma subunits) constitutively binds to CXCR1/CXCR2 receptor and activation by IL8 leads to beta and gamma subunits release from Galpha (GNAI2 in neutrophils) and activation of several downstream signaling pathways including PI3K and MAPK pathways. This chain is Interleukin-8 (CXCL8), found in Bos taurus (Bovine).